Reading from the N-terminus, the 106-residue chain is UPF0145 protein SCO3412 (106 aa).

Belongs to the UPF0145 family.

This is UPF0145 protein SCO3412 from Streptomyces coelicolor (strain ATCC BAA-471 / A3(2) / M145).